The primary structure comprises 787 residues: Protein smoothened (787 aa).

The first 27 residues, methionine 1–glycine 27, serve as a signal peptide directing secretion. Topologically, residues arginine 28–tyrosine 233 are extracellular. The segment at alanine 30–proline 60 is disordered. N-linked (GlcNAc...) asparagine glycosylation is present at asparagine 35. Residues glycine 38–alanine 53 show a composition bias toward low complexity. Intrachain disulfides connect cysteine 64-cysteine 178, cysteine 70-cysteine 134, cysteine 78-cysteine 127, cysteine 118-cysteine 154, and cysteine 147-cysteine 169. Residues glycine 65 to glutamate 181 form the FZ domain. Cholesterol is bound at residue aspartate 95. N-linked (GlcNAc...) asparagine glycosylation occurs at asparagine 188. 2 disulfides stabilise this stretch: cysteine 193/cysteine 213 and cysteine 217/cysteine 295. Residues isoleucine 234–alanine 254 traverse the membrane as a helical segment. Topologically, residues aspartate 255 to tyrosine 262 are cytoplasmic. The chain crosses the membrane as a helical span at residues proline 263–alanine 283. Over glutamine 284 to cysteine 314 the chain is Extracellular. Asparagine 309 is a glycosylation site (N-linked (GlcNAc...) asparagine). An intrachain disulfide couples cysteine 314 to cysteine 390. Residues valine 315–leucine 335 form a helical membrane-spanning segment. At threonine 336–serine 358 the chain is on the cytoplasmic side. Residues tyrosine 359–alanine 379 form a helical membrane-spanning segment. Residues glutamine 380–glycine 402 are Extracellular-facing. Tyrosine 394 provides a ligand contact to cholesterol. The chain crosses the membrane as a helical span at residues phenylalanine 403–valine 423. Residues methionine 424 to arginine 451 lie on the Cytoplasmic side of the membrane. The chain crosses the membrane as a helical span at residues leucine 452–tyrosine 472. Residues aspartate 473 to alanine 524 are Extracellular-facing. A disulfide bridge connects residues cysteine 490 and cysteine 507. A helical transmembrane segment spans residues methionine 525–tryptophan 545. The tract at residues threonine 538 to isoleucine 569 is interaction with BBS5 and BBS7. The Cytoplasmic portion of the chain corresponds to arginine 546–phenylalanine 787. Phosphoserine is present on residues serine 556, serine 574, and serine 590. A required for interaction with PRKACA region spans residues alanine 570–asparagine 653. The interval glutamine 581–threonine 593 is interaction with DLG5. Threonine 593 is modified (phosphothreonine). 2 positions are modified to phosphoserine: serine 595 and serine 638. A phosphothreonine mark is found at threonine 640 and threonine 644. Residue serine 662 is modified to Phosphoserine. The segment at lysine 667–leucine 704 is disordered. Positions arginine 668–lysine 680 are enriched in basic residues. Positions leucine 685–serine 699 are enriched in pro residues.

This sequence belongs to the G-protein coupled receptor Fz/Smo family. In terms of assembly, homodimer. Interacts (via C-terminus) with protein kinase A catalytic subunit PRKACA; interacts with free PRKACA subunits and the interaction leads to sequestration of PRKACA at the membrane, preventing PRKACA-mediated phosphorylation of GLI transcription factors. Interacts with ARRB2. Interacts with KIF7. Interacts with BBS5 and BBS7; the interactions are indicative for the association of SMO with the BBsome complex to facilitate ciliary localization of SMO. Interacts with DLG5 and SDCBP. Interacts with GAS8/DRC4. Post-translationally, phosphorylation by GRK kinases is required for interaction with protein kinase A catalytic subunit PRKACA.

The protein resides in the cell membrane. Its subcellular location is the cell projection. It is found in the cilium. G protein-coupled receptor which associates with the patched protein (PTCH) to transduce hedgehog protein signaling. Binding of sonic hedgehog (SHH) to its receptor patched prevents inhibition of smoothened (SMO) by patched. When active, SMO binds to and sequesters protein kinase A catalytic subunit PRKACA at the cell membrane, preventing PRKACA-mediated phosphorylation of GLI transcription factors which releases the GLI proteins from PRKACA-mediated inhibition and allows for transcriptional activation of hedgehog pathway target genes. Required for the accumulation of KIF7, GLI2 and GLI3 in the cilia. Interacts with DLG5 at the ciliary base to induce the accumulation of KIF7 and GLI2 at the ciliary tip for GLI2 activation. The sequence is that of Protein smoothened (SMO) from Homo sapiens (Human).